The primary structure comprises 253 residues: Indole-3-glycerol phosphate synthase (253 aa).

Belongs to the TrpC family.

It catalyses the reaction 1-(2-carboxyphenylamino)-1-deoxy-D-ribulose 5-phosphate + H(+) = (1S,2R)-1-C-(indol-3-yl)glycerol 3-phosphate + CO2 + H2O. It functions in the pathway amino-acid biosynthesis; L-tryptophan biosynthesis; L-tryptophan from chorismate: step 4/5. In Bacillus cereus (strain ATCC 14579 / DSM 31 / CCUG 7414 / JCM 2152 / NBRC 15305 / NCIMB 9373 / NCTC 2599 / NRRL B-3711), this protein is Indole-3-glycerol phosphate synthase.